Consider the following 376-residue polypeptide: Erythronate-4-phosphate dehydrogenase (376 aa).

Substrate contacts are provided by Ser45 and Thr67. Asp147 contributes to the NAD(+) binding site. Arg209 is a catalytic residue. Residue Asp233 participates in NAD(+) binding. Glu238 is an active-site residue. His255 (proton donor) is an active-site residue. Residue Gly258 coordinates NAD(+). Tyr259 is a substrate binding site.

The protein belongs to the D-isomer specific 2-hydroxyacid dehydrogenase family. PdxB subfamily. As to quaternary structure, homodimer.

The protein localises to the cytoplasm. It carries out the reaction 4-phospho-D-erythronate + NAD(+) = (R)-3-hydroxy-2-oxo-4-phosphooxybutanoate + NADH + H(+). It functions in the pathway cofactor biosynthesis; pyridoxine 5'-phosphate biosynthesis; pyridoxine 5'-phosphate from D-erythrose 4-phosphate: step 2/5. Catalyzes the oxidation of erythronate-4-phosphate to 3-hydroxy-2-oxo-4-phosphonooxybutanoate. This chain is Erythronate-4-phosphate dehydrogenase, found in Shewanella baltica (strain OS185).